Consider the following 475-residue polypeptide: Ribulose bisphosphate carboxylase large chain (475 aa).

A propeptide spanning residues Met1–Ser2 is cleaved from the precursor. The residue at position 3 (Pro3) is an N-acetylproline. Position 14 is an N6,N6,N6-trimethyllysine (Lys14). Catalysis depends on Lys175, which acts as the Proton acceptor. D-ribulose 1,5-bisphosphate is bound by residues Lys175 and Lys177. Residues Lys201, Asp203, and Glu204 each coordinate Mg(2+). Lys201 carries the N6-carboxylysine modification. Glu204 is a D-ribulose 1,5-bisphosphate binding site. His294 (proton acceptor) is an active-site residue. D-ribulose 1,5-bisphosphate contacts are provided by Arg295, His327, Lys334, Ser379, Gly381, Gly403, and Gly404.

This sequence belongs to the RuBisCO large chain family. Type I subfamily. Heterohexadecamer of 8 large chains and 8 small chains. Heterohexadecamer; disulfide-linked. The disulfide link is formed within the large subunit homodimers. Mg(2+) serves as cofactor. The disulfide bond which can form in the large chain dimeric partners within the hexadecamer appears to be associated with oxidative stress and protein turnover.

Its subcellular location is the plastid. It localises to the chloroplast. It carries out the reaction 2 (2R)-3-phosphoglycerate + 2 H(+) = D-ribulose 1,5-bisphosphate + CO2 + H2O. It catalyses the reaction D-ribulose 1,5-bisphosphate + O2 = 2-phosphoglycolate + (2R)-3-phosphoglycerate + 2 H(+). Functionally, ruBisCO catalyzes two reactions: the carboxylation of D-ribulose 1,5-bisphosphate, the primary event in carbon dioxide fixation, as well as the oxidative fragmentation of the pentose substrate in the photorespiration process. Both reactions occur simultaneously and in competition at the same active site. Binds to abscisic acid (ABA); only half of the possible binding sites are occupied in the crystal and there are indications this is a low affinity site. This chain is Ribulose bisphosphate carboxylase large chain, found in Pisum sativum (Garden pea).